We begin with the raw amino-acid sequence, 459 residues long: Argininosuccinate lyase (459 aa).

The protein belongs to the lyase 1 family. Argininosuccinate lyase subfamily.

It localises to the cytoplasm. The catalysed reaction is 2-(N(omega)-L-arginino)succinate = fumarate + L-arginine. It participates in amino-acid biosynthesis; L-arginine biosynthesis; L-arginine from L-ornithine and carbamoyl phosphate: step 3/3. This Staphylococcus aureus (strain USA300) protein is Argininosuccinate lyase.